A 510-amino-acid chain; its full sequence is MDADDTPPNLQISPTAGPLRSHHNTDGHEPNATAADQQERESTNPTHGCVNHPWANPSTATCMESPERSQQTSLFLLKHGLTRDPIHQRERVDVFPQFNKPPWVFRISKLSRLIVPIFTLNEQLCFSKLQIRDRPRFAGRGTYGRVHIYPSSKIAVKTMDSRVFNRELINAILASEGSIRAGERLGISSIVCLLGFSLQTKQLLFPAYDMDMDEYIVRLSRRLTIPDHIDRKIAHVFLDLAQALTFLNRTCGLTHLDVKCGNIFLNVDNFASLEITTAVIGDYSLVTLNTYSLCTRAIFEVGNPSHPEHVLRVPRDASQMSFRLVLSHGTNQPPEILLDYINGTGLTKYTGTLPQRVGLAIDLYALGQALLEVILLGRLPGQLPISVHRTPHYHYYGHKLSPDLALDTLAYRCVLAPYILPSDIPGDLNYNPFIHAGELNTRISRNSLRRIFQCHAVRYGVTHSKLFEGIRIPASLYPATVVTSLLCHDNSEIRSDHPLLWHDRDWIGST.

Residues 1–63 (MDADDTPPNL…WANPSTATCM (63 aa)) form a disordered region. The 327-residue stretch at 132–458 (RDRPRFAGRG…RRIFQCHAVR (327 aa)) folds into the Protein kinase domain. ATP-binding positions include 138-146 (AGRGTYGRV) and Lys-157. Asp-257 acts as the Proton acceptor in catalysis.

This sequence belongs to the protein kinase superfamily. Ser/Thr protein kinase family. In terms of processing, autophosphorylated.

The protein resides in the virion tegument. It is found in the host nucleus. It carries out the reaction L-seryl-[protein] + ATP = O-phospho-L-seryl-[protein] + ADP + H(+). The enzyme catalyses L-threonyl-[protein] + ATP = O-phospho-L-threonyl-[protein] + ADP + H(+). Multifunctional serine/threonine kinase that plays a role in several processes including egress of virus particles from the nucleus, modulation of the actin cytoskeleton and regulation of viral and cellular gene expression. Regulates the nuclear localization of viral envelopment factor proteins 24 and 27, by phosphorylating the protein kinase ORF66, indicating a role in nuclear egress. Disrupts host nuclear lamins, including LMNA and LMNB1. Phosphorylates the viral Fc receptor composed of glycoproteins E (gE) and I (gI). Phosphorylation of glycoprotein E (gE) by UL13 alters its subcellular localization, from the host early endosome to the plasma membrane. Participates in the transcriptional regulation of cellular and viral mRNAs mainly by phosphorylating the viral transcriptional regulator IE63. This chain is Serine/threonine-protein kinase UL13 homolog, found in Varicella-zoster virus (strain Dumas) (HHV-3).